We begin with the raw amino-acid sequence, 456 residues long: Phosphomethylpyrimidine synthase (456 aa).

Residues Asn-80, Met-109, Tyr-139, His-175, 195–197 (SRG), 236–239 (DSLR), and Glu-275 each bind substrate. His-279 is a binding site for Zn(2+). Tyr-302 is a substrate binding site. His-343 serves as a coordination point for Zn(2+). Positions 423, 426, and 431 each coordinate [4Fe-4S] cluster.

It belongs to the ThiC family. It depends on [4Fe-4S] cluster as a cofactor.

It catalyses the reaction 5-amino-1-(5-phospho-beta-D-ribosyl)imidazole + S-adenosyl-L-methionine = 4-amino-2-methyl-5-(phosphooxymethyl)pyrimidine + CO + 5'-deoxyadenosine + formate + L-methionine + 3 H(+). Its pathway is cofactor biosynthesis; thiamine diphosphate biosynthesis. In terms of biological role, catalyzes the synthesis of the hydroxymethylpyrimidine phosphate (HMP-P) moiety of thiamine from aminoimidazole ribotide (AIR) in a radical S-adenosyl-L-methionine (SAM)-dependent reaction. The chain is Phosphomethylpyrimidine synthase from Synechococcus sp. (strain ATCC 27144 / PCC 6301 / SAUG 1402/1) (Anacystis nidulans).